Here is a 318-residue protein sequence, read N- to C-terminus: 2-desacetyl-2-hydroxyethyl bacteriochlorophyllide A dehydrogenase (318 aa).

The protein operates within porphyrin-containing compound metabolism; bacteriochlorophyll biosynthesis (light-independent). This protein catalyzes the penultimate step in bacteriochlorophyll a biosynthesis. This Cereibacter sphaeroides (strain ATCC 17023 / DSM 158 / JCM 6121 / CCUG 31486 / LMG 2827 / NBRC 12203 / NCIMB 8253 / ATH 2.4.1.) (Rhodobacter sphaeroides) protein is 2-desacetyl-2-hydroxyethyl bacteriochlorophyllide A dehydrogenase (bchC).